We begin with the raw amino-acid sequence, 116 residues long: Evasin P1180 (116 aa).

The signal sequence occupies residues 1 to 25; it reads MARNWSFRVIFVSAMWCALLKFATL. Cystine bridges form between Cys38–Cys58, Cys54–Cys95, Cys71–Cys100, and Cys90–Cys109. N-linked (GlcNAc...) asparagine glycans are attached at residues Asn45, Asn73, and Asn104.

It localises to the secreted. Functionally, salivary chemokine-binding protein which binds to host chemokines CCL2, CCL3, CCL4, CCL8 and CCL18. This Amblyomma triste (Neotropical tick) protein is Evasin P1180.